The following is a 186-amino-acid chain: Elongation factor P (186 aa).

This sequence belongs to the elongation factor P family.

It is found in the cytoplasm. It functions in the pathway protein biosynthesis; polypeptide chain elongation. Functionally, involved in peptide bond synthesis. Stimulates efficient translation and peptide-bond synthesis on native or reconstituted 70S ribosomes in vitro. Probably functions indirectly by altering the affinity of the ribosome for aminoacyl-tRNA, thus increasing their reactivity as acceptors for peptidyl transferase. The sequence is that of Elongation factor P from Prochlorococcus marinus (strain SARG / CCMP1375 / SS120).